The chain runs to 331 residues: Tagatose 1,6-diphosphate aldolase 2 (331 aa).

This sequence belongs to the aldolase LacD family.

It catalyses the reaction D-tagatofuranose 1,6-bisphosphate = D-glyceraldehyde 3-phosphate + dihydroxyacetone phosphate. It functions in the pathway carbohydrate metabolism; D-tagatose 6-phosphate degradation; D-glyceraldehyde 3-phosphate and glycerone phosphate from D-tagatose 6-phosphate: step 2/2. The polypeptide is Tagatose 1,6-diphosphate aldolase 2 (lacD2) (Enterococcus faecalis (strain ATCC 700802 / V583)).